A 525-amino-acid polypeptide reads, in one-letter code: Cytochrome P450 CYP72A613 (525 aa).

Residues 2-22 (VFLFPTGTIIIWVLTILLAVI) traverse the membrane as a helical segment. Cysteine 473 is a binding site for heme.

Belongs to the cytochrome P450 family. Mainly expressed in leaves and seed pods and, to a lower extent, in flowers and stems.

The protein localises to the membrane. Its pathway is steroid metabolism; cholesterol metabolism. Functionally, involved in the biosynthesis of spiroketal steroid and saponin natural products from cholesterol such as diosgenin and analogs (e.g. furostanol and spirostanol), plant defense compounds used as main precursors for the industrial production of steroid hormones. During the 5,6-spiroketalization of cholesterol, may catalyze the 27-monohydroxylation of furostanol-type steroid to an intermediate product that undergoes a stereospecific formation of the terminal heterocycle to yield diosgenin. The sequence is that of Cytochrome P450 CYP72A613 from Trigonella foenum-graecum (Fenugreek).